A 394-amino-acid chain; its full sequence is Short-chain dehydrogenase/reductase family 42E member 1 (394 aa).

The Proton acceptor role is filled by tyrosine 153. Lysine 157 serves as a coordination point for NAD(+). 2 helical membrane passes run leucine 283–glycine 303 and phenylalanine 367–leucine 387.

It belongs to the 3-beta-HSD family.

It is found in the membrane. This is Short-chain dehydrogenase/reductase family 42E member 1 (Sdr42e1) from Mus musculus (Mouse).